A 352-amino-acid chain; its full sequence is Histidine biosynthesis bifunctional protein HisB (352 aa).

The interval 1 to 164 (MSQKILFIDR…EIENEILSSF (164 aa)) is histidinol-phosphatase. Aspartate 9 acts as the Nucleophile in catalysis. Positions 9 and 11 each coordinate Mg(2+). Aspartate 11 serves as the catalytic Proton donor. Positions 93, 95, 101, and 103 each coordinate Zn(2+). Aspartate 130 is a binding site for Mg(2+). The segment at 165-352 (RSASYQRTTK…ENLASSKGVI (188 aa)) is imidazoleglycerol-phosphate dehydratase.

It in the N-terminal section; belongs to the histidinol-phosphatase family. In the C-terminal section; belongs to the imidazoleglycerol-phosphate dehydratase family. Mg(2+) is required as a cofactor. The cofactor is Zn(2+).

It localises to the cytoplasm. The catalysed reaction is D-erythro-1-(imidazol-4-yl)glycerol 3-phosphate = 3-(imidazol-4-yl)-2-oxopropyl phosphate + H2O. It catalyses the reaction L-histidinol phosphate + H2O = L-histidinol + phosphate. It functions in the pathway amino-acid biosynthesis; L-histidine biosynthesis; L-histidine from 5-phospho-alpha-D-ribose 1-diphosphate: step 6/9. Its pathway is amino-acid biosynthesis; L-histidine biosynthesis; L-histidine from 5-phospho-alpha-D-ribose 1-diphosphate: step 8/9. The chain is Histidine biosynthesis bifunctional protein HisB from Campylobacter jejuni subsp. jejuni serotype O:2 (strain ATCC 700819 / NCTC 11168).